The primary structure comprises 440 residues: Chromosome partition protein MukF (440 aa).

The tract at residues Leu-208 to Ile-236 is leucine-zipper.

Belongs to the MukF family. Interacts, and probably forms a ternary complex, with MukE and MukB via its C-terminal region. The complex formation is stimulated by calcium or magnesium. It is required for an interaction between MukE and MukB.

The protein localises to the cytoplasm. Its subcellular location is the nucleoid. Functionally, involved in chromosome condensation, segregation and cell cycle progression. May participate in facilitating chromosome segregation by condensation DNA from both sides of a centrally located replisome during cell division. Not required for mini-F plasmid partitioning. Probably acts via its interaction with MukB and MukE. Overexpression results in anucleate cells. It has a calcium binding activity. The protein is Chromosome partition protein MukF of Escherichia coli O127:H6 (strain E2348/69 / EPEC).